Consider the following 470-residue polypeptide: Glutamate--tRNA ligase 2 (470 aa).

A 'HIGH' region motif is present at residues 10–20 (PSPTGFLHIGS). The 'KMSKS' region signature appears at 239 to 243 (KLSKR). K242 lines the ATP pocket.

Belongs to the class-I aminoacyl-tRNA synthetase family. Glutamate--tRNA ligase type 1 subfamily. Monomer.

Its subcellular location is the cytoplasm. The enzyme catalyses tRNA(Glu) + L-glutamate + ATP = L-glutamyl-tRNA(Glu) + AMP + diphosphate. In terms of biological role, catalyzes the attachment of glutamate to tRNA(Glu) in a two-step reaction: glutamate is first activated by ATP to form Glu-AMP and then transferred to the acceptor end of tRNA(Glu). The polypeptide is Glutamate--tRNA ligase 2 (Rickettsia prowazekii (strain Madrid E)).